The primary structure comprises 174 residues: Alkyl hydroperoxide reductase AhpD (174 aa).

Cys-130 serves as the catalytic Proton donor. Cys-130 and Cys-133 are oxidised to a cystine. The active-site Cysteine sulfenic acid (-SOH) intermediate is Cys-133.

Belongs to the AhpD family. Homotrimer.

The enzyme catalyses N(6)-[(R)-dihydrolipoyl]-L-lysyl-[lipoyl-carrier protein] + a hydroperoxide = N(6)-[(R)-lipoyl]-L-lysyl-[lipoyl-carrier protein] + an alcohol + H2O. Its function is as follows. Antioxidant protein with alkyl hydroperoxidase activity. Required for the reduction of the AhpC active site cysteine residues and for the regeneration of the AhpC enzyme activity. The polypeptide is Alkyl hydroperoxide reductase AhpD (Corynebacterium kroppenstedtii (strain DSM 44385 / JCM 11950 / CIP 105744 / CCUG 35717)).